Reading from the N-terminus, the 451-residue chain is Protein NINJA homolog 1 (451 aa).

Disordered regions lie at residues 1–223 (MDDE…QGNP), 321–346 (ISQADDGKKTQEAGASSSALVEDDKK), and 427–451 (DAPGQENSATLPAFPVGNQAASAQN). Residues 23–35 (KARDAPLEPKAEP) show a composition bias toward basic and acidic residues. Polar residues-rich tracts occupy residues 38–49 (EESSSKGVSQTP), 86–103 (PGSSSVPVADGSNEQKPV), and 143–153 (ISISTDDGSTG). The span at 154-163 (ENEDVAESEA) shows a compositional bias: acidic residues. The segment covering 207–216 (SFSGSESSSG) has biased composition (low complexity).

This sequence belongs to the Ninja family. In terms of assembly, interacts with TIFY10C/JAZ8. Interacts with TIFY11A/JAZ9.

Its subcellular location is the nucleus. In Oryza sativa subsp. japonica (Rice), this protein is Protein NINJA homolog 1.